The sequence spans 107 residues: Envelope small membrane protein (107 aa).

Over 1–11 the chain is Virion surface; sequence MMNLVNKSLEE. The helical transmembrane segment at 12 to 32 threads the bilayer; the sequence is NGSFLTAVYIFCAFVALYLLG. The Intravirion portion of the chain corresponds to 33-107; the sequence is RALHAFVQAA…NFQNDGKLHS (75 aa).

This sequence belongs to the gammacoronaviruses E protein family. In terms of assembly, homooligomer. Interacts with the M membrane protein in the budding compartment of the host cell, which is located between endoplasmic reticulum and the Golgi complex. The cytoplasmic tails of both proteins are important for this function. Interacts with Nucleoprotein.

Its subcellular location is the host Golgi apparatus membrane. Functionally, plays a central role in virus morphogenesis and assembly. Acts as a viroporin and self-assembles in host membranes forming pentameric protein-lipid pores that allow ion transport. Also plays a role in the induction of apoptosis. This chain is Envelope small membrane protein, found in Gallus gallus (Chicken).